A 448-amino-acid chain; its full sequence is Glutamyl-tRNA(Gln) amidotransferase subunit D (448 aa).

Residues serine 92 to asparagine 423 form the Asparaginase/glutaminase domain. Catalysis depends on residues threonine 102, threonine 178, aspartate 179, and lysine 257.

This sequence belongs to the asparaginase 1 family. GatD subfamily. As to quaternary structure, heterodimer of GatD and GatE.

The enzyme catalyses L-glutamyl-tRNA(Gln) + L-glutamine + ATP + H2O = L-glutaminyl-tRNA(Gln) + L-glutamate + ADP + phosphate + H(+). Its function is as follows. Allows the formation of correctly charged Gln-tRNA(Gln) through the transamidation of misacylated Glu-tRNA(Gln) in organisms which lack glutaminyl-tRNA synthetase. The reaction takes place in the presence of glutamine and ATP through an activated gamma-phospho-Glu-tRNA(Gln). The GatDE system is specific for glutamate and does not act on aspartate. In Sulfurisphaera tokodaii (strain DSM 16993 / JCM 10545 / NBRC 100140 / 7) (Sulfolobus tokodaii), this protein is Glutamyl-tRNA(Gln) amidotransferase subunit D.